A 261-amino-acid polypeptide reads, in one-letter code: 5'-nucleotidase SurE (261 aa).

4 residues coordinate a divalent metal cation: D8, D9, S43, and N96.

It belongs to the SurE nucleotidase family. It depends on a divalent metal cation as a cofactor.

It localises to the cytoplasm. The enzyme catalyses a ribonucleoside 5'-phosphate + H2O = a ribonucleoside + phosphate. In terms of biological role, nucleotidase that shows phosphatase activity on nucleoside 5'-monophosphates. This chain is 5'-nucleotidase SurE, found in Cereibacter sphaeroides (strain KD131 / KCTC 12085) (Rhodobacter sphaeroides).